Reading from the N-terminus, the 513-residue chain is MTTQLPAYVAILLFYVSRASCQDTFTAAVYEHAAILPNATLTPVSREEALALMNRNLDILEGAITSAADQGAHIIVTPEDAIYGWNFNRDSLYPYLEDIPDPEVNWIPCNNRNRFGQTPVQERLSCLAKNNSIYVVANIGDKKPCDTSDPQCPPDGRYQYNTDVVFDSQGKLVARYHKQNLFMGENQFNVPKEPEIVTFNTTFGSFGIFTCFDILFHDPAVTLVKDFHVDTIVFPTAWMNVLPHLSAVEFHSAWAMGMRVNFLASNIHYPSKKMTGSGIYAPNSSRAFHYDMKTEEGKLLLSQLDSHPSHSAVVNWTSYASSIEALSSGNKEFKGTVFFDEFTFVKLTGVAGNYTVCQKDLCCHLSYKMSENIPNEVYALGAFDGLHTVEGRYYLQICTLLKCKTTNLNTCGDSAETASTRFEMFSLSGTFGTQYVFPEVLLSENQLAPGEFQVSTDGRLFSLKPTSGPVLTVTLFGRLYEKDWASNASSGLTAQARIIMLIVIAPIVCSLSW.

The N-terminal stretch at 1–21 (MTTQLPAYVAILLFYVSRASC) is a signal peptide. Asparagine 38 carries an N-linked (GlcNAc...) asparagine glycan. In terms of domain architecture, CN hydrolase spans 39 to 306 (ATLTPVSREE…GKLLLSQLDS (268 aa)). The active-site Proton acceptor is glutamate 79. Asparagine 130 carries an N-linked (GlcNAc...) asparagine glycan. Lysine 178 functions as the Proton donor in the catalytic mechanism. Asparagine 200 carries an N-linked (GlcNAc...) asparagine glycan. The Nucleophile role is filled by cysteine 211. N-linked (GlcNAc...) asparagine glycans are attached at residues asparagine 283, asparagine 315, and asparagine 353. Glycine 491 is lipidated: GPI-anchor amidated glycine. Residues 492–513 (LTAQARIIMLIVIAPIVCSLSW) constitute a propeptide, removed in mature form.

Belongs to the carbon-nitrogen hydrolase superfamily. BTD/VNN family. Monomer. As to expression, widely expressed with higher expression in spleen, kidney and blood. Overexpressed in lesional psoriatic skin.

It localises to the cell membrane. The enzyme catalyses (R)-pantetheine + H2O = cysteamine + (R)-pantothenate. Functionally, amidohydrolase that hydrolyzes specifically one of the carboamide linkages in D-pantetheine thus recycling pantothenic acid (vitamin B5) and releasing cysteamine. In Homo sapiens (Human), this protein is Pantetheinase (VNN1).